We begin with the raw amino-acid sequence, 391 residues long: Ferrochelatase (391 aa).

Fe cation is bound by residues His-196 and Glu-281.

It belongs to the ferrochelatase family.

It is found in the cytoplasm. It catalyses the reaction heme b + 2 H(+) = protoporphyrin IX + Fe(2+). Its pathway is porphyrin-containing compound metabolism; protoheme biosynthesis; protoheme from protoporphyrin-IX: step 1/1. In terms of biological role, catalyzes the ferrous insertion into protoporphyrin IX. The chain is Ferrochelatase from Prochlorococcus marinus (strain NATL2A).